A 70-amino-acid chain; its full sequence is Small ribosomal subunit protein bS21 (70 aa).

This sequence belongs to the bacterial ribosomal protein bS21 family.

This is Small ribosomal subunit protein bS21 from Azoarcus sp. (strain BH72).